We begin with the raw amino-acid sequence, 194 residues long: Peptidyl-tRNA hydrolase (194 aa).

Tyrosine 17 is a tRNA binding site. The active-site Proton acceptor is histidine 22. Residues tyrosine 68, asparagine 70, and asparagine 116 each coordinate tRNA.

Belongs to the PTH family. As to quaternary structure, monomer.

It is found in the cytoplasm. It carries out the reaction an N-acyl-L-alpha-aminoacyl-tRNA + H2O = an N-acyl-L-amino acid + a tRNA + H(+). Hydrolyzes ribosome-free peptidyl-tRNAs (with 1 or more amino acids incorporated), which drop off the ribosome during protein synthesis, or as a result of ribosome stalling. Its function is as follows. Catalyzes the release of premature peptidyl moieties from peptidyl-tRNA molecules trapped in stalled 50S ribosomal subunits, and thus maintains levels of free tRNAs and 50S ribosomes. This Pseudomonas paraeruginosa (strain DSM 24068 / PA7) (Pseudomonas aeruginosa (strain PA7)) protein is Peptidyl-tRNA hydrolase.